A 122-amino-acid polypeptide reads, in one-letter code: Putative cryptic phosphonate transport system permease protein PhnE2 (122 aa).

The ABC transmembrane type-1 domain occupies 1 to 114 (MLALFIHTTG…VTVSLLDFLS (114 aa)). A run of 4 helical transmembrane segments spans residues 3–23 (ALFIHTTGVLSKLLSEAVEAI), 39–59 (LEEILYGVLPQVMPLLISYSL), 68–88 (SATVVGMVGAGGIGVTLWEAI), and 93–113 (FQQTCALMVLIIVTVSLLDFL).

This sequence belongs to the binding-protein-dependent transport system permease family. As to quaternary structure, if the reading frame is restored, the complex is composed of two ATP-binding proteins (PhnC), two transmembrane proteins (PhnE) and a solute-binding protein (PhnD).

Its subcellular location is the cell inner membrane. Functionally, C-terminal fragment of the PhnE protein, part of a phosphonate usage operon that is cryptic in K12 strains. Growth of K12 strains on phosphonate can be observed when it is used as the sole phosphorus source after a 60 hour lag period, suggesting the operon is activated. An intact PhnE in strain B is (AC A0A140NFA3). Part of the binding-protein-dependent transport system for phosphonates; probably responsible for the translocation of the substrate across the membrane. The sequence is that of Putative cryptic phosphonate transport system permease protein PhnE2 (phnE) from Escherichia coli (strain K12).